A 185-amino-acid polypeptide reads, in one-letter code: Ribosome-recycling factor (185 aa).

The protein belongs to the RRF family.

It localises to the cytoplasm. In terms of biological role, responsible for the release of ribosomes from messenger RNA at the termination of protein biosynthesis. May increase the efficiency of translation by recycling ribosomes from one round of translation to another. The sequence is that of Ribosome-recycling factor from Geobacter metallireducens (strain ATCC 53774 / DSM 7210 / GS-15).